We begin with the raw amino-acid sequence, 495 residues long: MSSLTMQVTKRLETFLQGTKKLYIDGKFVPSASGATFDTPNPATGETLMTLYEAQAADVDKAVKAARKAFDQGEWRTMSPASRSRLMYKLADLMEEHKTELAQLETLDNGKPINETTNGDIPLAIEHMRYYAGWCTKITGQTIPVSGAYFNYTRHEPVGVVGQIIPWNFPLLMAMWKMGAALATGCTIVLKPAEQTPLSALYLAELIDQAGFPAGVINIIPGFGEDAGEALTNHEAVDKIAFTGSTEIGKKIMSTAAKSIKRVTLELGGKSPNILLPDANLKKAIPGALNGVMFNQGQVCCAGSRVFIHKDQYDEVVDEMASYAESLRQGAGLHKDTQIGPLVSKEQHERVLSYIQKGKDEGAKAVTGGSCPFEAGYFVAPTVFANVEDEMTIAKEEIFGPVLTAIPYETVDEVIERANHSEYGLAAGLWTENVKQAHYIADRLQAGTVWVNCYNVFDAASPFGGYKQSGLGREMGSYALDNYTEVKSVWVNLED.

244-249 (GSTEIG) is a binding site for NAD(+). Active-site residues include Glu266 and Cys300.

It belongs to the aldehyde dehydrogenase family.

It catalyses the reaction an aldehyde + NAD(+) + H2O = a carboxylate + NADH + 2 H(+). This chain is Putative aldehyde dehydrogenase DhaS (dhaS), found in Bacillus subtilis (strain 168).